Here is a 161-residue protein sequence, read N- to C-terminus: EP300-interacting inhibitor of differentiation 2B (161 aa).

Disordered regions lie at residues 1–26 and 54–77; these read MAEPTGLLEMSELPGDSSVPQVGTAS and ARSMARMPGPVPGPIPSSVPGLAS.

In terms of assembly, homodimer and heterodimer with EID2. Interacts with HDAC1 and HDAC2.

The protein localises to the nucleus. Acts as a repressor of MYOD-dependent transcription, glucocorticoid receptor-dependent transcription, and muscle differentiation. The protein is EP300-interacting inhibitor of differentiation 2B of Homo sapiens (Human).